The primary structure comprises 975 residues: Glycine dehydrogenase (decarboxylating) (975 aa).

Lysine 723 is modified (N6-(pyridoxal phosphate)lysine).

It belongs to the GcvP family. The glycine cleavage system is composed of four proteins: P, T, L and H. Requires pyridoxal 5'-phosphate as cofactor.

It catalyses the reaction N(6)-[(R)-lipoyl]-L-lysyl-[glycine-cleavage complex H protein] + glycine + H(+) = N(6)-[(R)-S(8)-aminomethyldihydrolipoyl]-L-lysyl-[glycine-cleavage complex H protein] + CO2. The glycine cleavage system catalyzes the degradation of glycine. The P protein binds the alpha-amino group of glycine through its pyridoxal phosphate cofactor; CO(2) is released and the remaining methylamine moiety is then transferred to the lipoamide cofactor of the H protein. This Burkholderia ambifaria (strain MC40-6) protein is Glycine dehydrogenase (decarboxylating).